The following is a 124-amino-acid chain: Large ribosomal subunit protein uL29 (124 aa).

Belongs to the universal ribosomal protein uL29 family.

This Tetrahymena thermophila (strain SB210) protein is Large ribosomal subunit protein uL29 (RPL35).